A 184-amino-acid polypeptide reads, in one-letter code: UPF0301 protein ABSDF3201 (184 aa).

It belongs to the UPF0301 (AlgH) family.

The chain is UPF0301 protein ABSDF3201 from Acinetobacter baumannii (strain SDF).